The primary structure comprises 189 residues: RNA-binding protein (189 aa).

A C4-type zinc finger spans residues 55-69 (CICPSSNHLVDDCVC). Positions 114-189 (FLTSVNPGES…DANTRKSKRK (76 aa)) are disordered. A compositionally biased stretch (basic and acidic residues) spans 158–167 (SSSERKRKEY). The segment covering 168–180 (SSNSETDLSSDSD) has biased composition (low complexity).

Belongs to the phytoreovirus RNA-binding protein family.

The protein localises to the host cytoplasm. Constituent of viral factories. Binds to ssRNA and dsRNA. The sequence is that of RNA-binding protein from Alopecurus aequalis (Barnyard grass).